A 116-amino-acid polypeptide reads, in one-letter code: Ribonuclease P protein component (116 aa).

This sequence belongs to the RnpA family. In terms of assembly, consists of a catalytic RNA component (M1 or rnpB) and a protein subunit.

The enzyme catalyses Endonucleolytic cleavage of RNA, removing 5'-extranucleotides from tRNA precursor.. RNaseP catalyzes the removal of the 5'-leader sequence from pre-tRNA to produce the mature 5'-terminus. It can also cleave other RNA substrates such as 4.5S RNA. The protein component plays an auxiliary but essential role in vivo by binding to the 5'-leader sequence and broadening the substrate specificity of the ribozyme. The polypeptide is Ribonuclease P protein component (Geobacillus sp. (strain WCH70)).